Consider the following 274-residue polypeptide: MAIVKCKPTSAGRRFVVKVVNQELHKGAPYAPLLEKKSKSGGRNNNGRITTRHIGGGHKQHYRLVDFRRNDKDGIPATVERVEYDPNRTAHIALLKYADGERRYIIAPKGVVAGDQLVAGNMAPIKPGNSLQLRNIPVGSTVHGIELKPGKGAQIARSAGASAQLIAREGAYVTLRLRSGEMRKVLAECRATLGEVSNSEHSLRSLGKAGAKRWRGVRPTVRGVAMNPVDHPHGGGEGRTSGGRHPVSPWGFPTKGAKTRANKRTDNMIVRRRK.

Disordered regions lie at residues 34 to 54 (LEKK…TRHI) and 224 to 261 (VAMN…KTRA).

The protein belongs to the universal ribosomal protein uL2 family. In terms of assembly, part of the 50S ribosomal subunit. Forms a bridge to the 30S subunit in the 70S ribosome.

Its function is as follows. One of the primary rRNA binding proteins. Required for association of the 30S and 50S subunits to form the 70S ribosome, for tRNA binding and peptide bond formation. It has been suggested to have peptidyltransferase activity; this is somewhat controversial. Makes several contacts with the 16S rRNA in the 70S ribosome. This Ectopseudomonas mendocina (strain ymp) (Pseudomonas mendocina) protein is Large ribosomal subunit protein uL2.